The chain runs to 729 residues: Fatty acid oxidation complex subunit alpha (729 aa).

Residues Met1 to Lys189 form an enoyl-CoA hydratase/isomerase region. A substrate-binding site is contributed by Asp296. Positions Glu311 to Ala729 are 3-hydroxyacyl-CoA dehydrogenase. Residues Met324, Asp343, Val400–Glu402, Lys407, and Ser429 contribute to the NAD(+) site. His450 acts as the For 3-hydroxyacyl-CoA dehydrogenase activity in catalysis. Asn453 is an NAD(+) binding site. Positions 500 and 660 each coordinate substrate. Residues Thr707–Ala729 form a disordered region.

In the N-terminal section; belongs to the enoyl-CoA hydratase/isomerase family. It in the C-terminal section; belongs to the 3-hydroxyacyl-CoA dehydrogenase family. Heterotetramer of two alpha chains (FadB) and two beta chains (FadA).

The catalysed reaction is a (3S)-3-hydroxyacyl-CoA + NAD(+) = a 3-oxoacyl-CoA + NADH + H(+). It catalyses the reaction a (3S)-3-hydroxyacyl-CoA = a (2E)-enoyl-CoA + H2O. The enzyme catalyses a 4-saturated-(3S)-3-hydroxyacyl-CoA = a (3E)-enoyl-CoA + H2O. It carries out the reaction (3S)-3-hydroxybutanoyl-CoA = (3R)-3-hydroxybutanoyl-CoA. The catalysed reaction is a (3Z)-enoyl-CoA = a 4-saturated (2E)-enoyl-CoA. It catalyses the reaction a (3E)-enoyl-CoA = a 4-saturated (2E)-enoyl-CoA. It functions in the pathway lipid metabolism; fatty acid beta-oxidation. Involved in the aerobic and anaerobic degradation of long-chain fatty acids via beta-oxidation cycle. Catalyzes the formation of 3-oxoacyl-CoA from enoyl-CoA via L-3-hydroxyacyl-CoA. It can also use D-3-hydroxyacyl-CoA and cis-3-enoyl-CoA as substrate. The sequence is that of Fatty acid oxidation complex subunit alpha from Salmonella typhi.